Here is a 74-residue protein sequence, read N- to C-terminus: UPF0154 protein LVIS_1358 (74 aa).

Residues Trp-4–Gly-24 form a helical membrane-spanning segment.

The protein belongs to the UPF0154 family.

It is found in the cell membrane. This Levilactobacillus brevis (strain ATCC 367 / BCRC 12310 / CIP 105137 / JCM 1170 / LMG 11437 / NCIMB 947 / NCTC 947) (Lactobacillus brevis) protein is UPF0154 protein LVIS_1358.